A 517-amino-acid chain; its full sequence is T-complex protein 11-like protein 2 (517 aa).

Residues 1–59 (MPFNGEKQCVSEDQQSDSESSRFAEGVASLSDYECSRQSFTSDSSSKSSSPASTSPPRG) form a disordered region. Residue Ser-16 is modified to Phosphoserine. Over residues 36-55 (SRQSFTSDSSSKSSSPASTS) the composition is skewed to low complexity.

Belongs to the TCP11 family. In terms of assembly, interacts with FMNL2; this interaction promotes muscle-derived satellite cell (MDSC) migration and differentiation.

The protein resides in the cytoplasm. Its subcellular location is the cytoskeleton. Promotes the migration of muscle-derived satellite cells (MDSCs) during differentiation throught interaction with FMNL2 and therefore may participate in microfilament assembly. This is T-complex protein 11-like protein 2 from Mus musculus (Mouse).